The sequence spans 499 residues: Guanosine-5'-triphosphate,3'-diphosphate pyrophosphatase (499 aa).

This sequence belongs to the GppA/Ppx family. GppA subfamily.

It catalyses the reaction guanosine 3'-diphosphate 5'-triphosphate + H2O = guanosine 3',5'-bis(diphosphate) + phosphate + H(+). It participates in purine metabolism; ppGpp biosynthesis; ppGpp from GTP: step 2/2. In terms of biological role, catalyzes the conversion of pppGpp to ppGpp. Guanosine pentaphosphate (pppGpp) is a cytoplasmic signaling molecule which together with ppGpp controls the 'stringent response', an adaptive process that allows bacteria to respond to amino acid starvation, resulting in the coordinated regulation of numerous cellular activities. In Klebsiella pneumoniae (strain 342), this protein is Guanosine-5'-triphosphate,3'-diphosphate pyrophosphatase.